The primary structure comprises 440 residues: 3-phosphoshikimate 1-carboxyvinyltransferase (440 aa).

3-phosphoshikimate is bound by residues lysine 19, serine 20, and arginine 24. Position 19 (lysine 19) interacts with phosphoenolpyruvate. Phosphoenolpyruvate-binding residues include glycine 92 and arginine 121. 4 residues coordinate 3-phosphoshikimate: serine 166, glutamine 168, aspartate 315, and lysine 342. Residue glutamine 168 coordinates phosphoenolpyruvate. The Proton acceptor role is filled by aspartate 315. Residues arginine 346 and arginine 399 each coordinate phosphoenolpyruvate.

This sequence belongs to the EPSP synthase family. As to quaternary structure, monomer.

It localises to the cytoplasm. The catalysed reaction is 3-phosphoshikimate + phosphoenolpyruvate = 5-O-(1-carboxyvinyl)-3-phosphoshikimate + phosphate. The protein operates within metabolic intermediate biosynthesis; chorismate biosynthesis; chorismate from D-erythrose 4-phosphate and phosphoenolpyruvate: step 6/7. Functionally, catalyzes the transfer of the enolpyruvyl moiety of phosphoenolpyruvate (PEP) to the 5-hydroxyl of shikimate-3-phosphate (S3P) to produce enolpyruvyl shikimate-3-phosphate and inorganic phosphate. This chain is 3-phosphoshikimate 1-carboxyvinyltransferase, found in Leptospira interrogans serogroup Icterohaemorrhagiae serovar copenhageni (strain Fiocruz L1-130).